A 285-amino-acid chain; its full sequence is Polyamine aminopropyltransferase (285 aa).

Residues 2–237 form the PABS domain; it reads QMWFSQYHTV…GYWLFGFASK (236 aa). Residue glutamine 31 coordinates S-methyl-5'-thioadenosine. Spermidine is bound at residue aspartate 86. S-methyl-5'-thioadenosine is bound by residues glutamate 106 and 137–138; that span reads DG. The active-site Proton acceptor is the aspartate 155. Residue 155-158 participates in spermidine binding; the sequence is DSTD.

This sequence belongs to the spermidine/spermine synthase family. As to quaternary structure, homodimer or homotetramer.

The protein resides in the cytoplasm. It catalyses the reaction S-adenosyl 3-(methylsulfanyl)propylamine + putrescine = S-methyl-5'-thioadenosine + spermidine + H(+). It participates in amine and polyamine biosynthesis; spermidine biosynthesis; spermidine from putrescine: step 1/1. Functionally, catalyzes the irreversible transfer of a propylamine group from the amino donor S-adenosylmethioninamine (decarboxy-AdoMet) to putrescine (1,4-diaminobutane) to yield spermidine. The protein is Polyamine aminopropyltransferase of Agathobacter rectalis (strain ATCC 33656 / DSM 3377 / JCM 17463 / KCTC 5835 / VPI 0990) (Eubacterium rectale).